Here is a 348-residue protein sequence, read N- to C-terminus: F-box protein At2g20380 (348 aa).

An F-box domain is found at 14–60; the sequence is SPESNSLPNDLIVTILARLSQSYYPKLSLVSKTFRAILASPELYQTR.

This chain is F-box protein At2g20380, found in Arabidopsis thaliana (Mouse-ear cress).